The primary structure comprises 192 residues: MERLIEELRKEIKADTEMTFTVSDVDSLLTADFESKHTAHSERGNSSPQYTETPLTDDAVATMDGWLDESYLHTINDKDVVAQLDEILLLLIAIRDGACGKELLQDIRRLFGTDLSPGTVYPHLNDLADEGMLDMTELAKRKVYRISDAEATFDTVEPAVNRLVTFSLVLKALMIDCNARYLQTQRSESNER.

DNA is bound at residue 140-145 (KRKVYR). The tract at residues 150–181 (EATFDTVEPAVNRLVTFSLVLKALMIDCNARY) is leucine-zipper.

Interacts with GvpD, also with c-GvpD from H.salinarum.

It localises to the cytoplasm. With respect to regulation, the amount of protein that accumulates is controlled by GvpD; GvpD causes a reduction in the amount of GvpE, preventing accumulation of excessive amounts of gas vesicles. Functionally, plays a regulatory role in gas vesicle synthesis, activates transcription of the gvpA operon, and probably of the gvpD operon. Gas vesicles are hollow, gas filled proteinaceous nanostructures found in some microorganisms. They allow positioning of halobacteria at the optimal depth for growth in the poorly aerated, shallow brine pools of their habitat. In terms of biological role, expression of a 9.5 kb mc-vac DNA fragment containing 2 divergently transcribed regions (gvpD-gvpE-gvpF-gvpG-gvpH-gvpI-gvpJ-gvpK-gvpL-gvpM and gvpA-gvpC-gvpN-gvpO) allows H.volcanii to produce gas vesicles. This is Transcriptional activator GvpE from Haloferax mediterranei (strain ATCC 33500 / DSM 1411 / JCM 8866 / NBRC 14739 / NCIMB 2177 / R-4) (Halobacterium mediterranei).